We begin with the raw amino-acid sequence, 381 residues long: Neuropeptide Y receptor type 2 (381 aa).

A disordered region spans residues 1–35; sequence MGPIGTEADENQTVEEMKVEQYGPQTTPRGELVPD. Residues 1 to 51 lie on the Extracellular side of the membrane; the sequence is MGPIGTEADENQTVEEMKVEQYGPQTTPRGELVPDPEPELIDSTKLIEVQV. N-linked (GlcNAc...) asparagine glycosylation is present at Asn11. A helical membrane pass occupies residues 52-72; the sequence is VLILAYCSIILLGVIGNSLVI. The Cytoplasmic segment spans residues 73–86; it reads HVVIKFKSMRTVTN. Residues 87 to 107 traverse the membrane as a helical segment; sequence FFIANLAVADLVVNTLCLPFT. Residues 108–124 are Extracellular-facing; that stretch reads LTYTLMGEWKMGPVLCH. Cysteines 123 and 203 form a disulfide. Residues 125–145 traverse the membrane as a helical segment; the sequence is LVPYAQGLAVQVSTITLTVIA. Topologically, residues 146 to 165 are cytoplasmic; that stretch reads LDRHRCIVYHLESKISKRIS. The helical transmembrane segment at 166–186 threads the bilayer; the sequence is FLIIGLAWGISALLASPLAIF. The Extracellular portion of the chain corresponds to 187–216; sequence REYSLIEIIPDFEIVACTEKWPGEEKSIYG. A helical transmembrane segment spans residues 217–237; that stretch reads TVYSLSSLLILYVLPLGIISF. Over 238–268 the chain is Cytoplasmic; that stretch reads SYTRIWSKLKSHVSPGAANDHYHQRRQKTTK. The chain crosses the membrane as a helical span at residues 269–289; the sequence is MLVCVVVVFAVSWLPLHAFQL. Topologically, residues 290 to 304 are extracellular; sequence AVDIDSHVLDLKEYK. A helical transmembrane segment spans residues 305–325; the sequence is LIFTVFHIIAMCSTFANPLLY. At 326-381 the chain is on the cytoplasmic side; that stretch reads GWMNSNYRKAFLSAFRCEQRLDAIHSEVSVTFKAKKNLEVRKNSGPNDSFTEATNV. Cys342 is lipidated: S-palmitoyl cysteine.

Belongs to the G-protein coupled receptor 1 family.

It is found in the cell membrane. In terms of biological role, receptor for neuropeptide Y and peptide YY. The polypeptide is Neuropeptide Y receptor type 2 (NPY2R) (Macaca mulatta (Rhesus macaque)).